Reading from the N-terminus, the 289-residue chain is Energy-coupling factor transporter ATP-binding protein EcfA2 (289 aa).

Residues 3 to 246 (IRFKQVDFTY…TQWLKEKQLG (244 aa)) enclose the ABC transporter domain. ATP is bound at residue 40–47 (GHTGSGKS).

The protein belongs to the ABC transporter superfamily. Energy-coupling factor EcfA family. Forms a stable energy-coupling factor (ECF) transporter complex composed of 2 membrane-embedded substrate-binding proteins (S component), 2 ATP-binding proteins (A component) and 2 transmembrane proteins (T component).

It localises to the cell membrane. Functionally, ATP-binding (A) component of a common energy-coupling factor (ECF) ABC-transporter complex. Unlike classic ABC transporters this ECF transporter provides the energy necessary to transport a number of different substrates. The polypeptide is Energy-coupling factor transporter ATP-binding protein EcfA2 (Enterococcus faecalis (strain ATCC 700802 / V583)).